The primary structure comprises 517 residues: Facilitated trehalose transporter Tret1 (517 aa).

Over 1–56 the chain is Cytoplasmic; sequence MWIEIPECYEVLRNVFSKFRRHSLTAAMVKLLMRADTHVSFTVPAEEPVAKCTFSQ. A helical membrane pass occupies residues 57–77; the sequence is VLAALSVSLGSMVVGFSSAYT. At 78–100 the chain is on the extracellular side; that stretch reads SPALVSMKDRNITSFEVTDQSGS. Asn88 is a glycosylation site (N-linked (GlcNAc...) asparagine). A helical membrane pass occupies residues 101-121; that stretch reads WVGGIMPLAGLVGGILGGPLI. Over 122–135 the chain is Cytoplasmic; sequence EYLGRKNTILATAT. A helical membrane pass occupies residues 136–156; sequence PFIISWLLIACATHVAMVLVG. Residues 157-158 are Extracellular-facing; that stretch reads RA. The chain crosses the membrane as a helical span at residues 159 to 179; that stretch reads LSGFSVGVASLSLPVYLGETV. Over 180–184 the chain is Cytoplasmic; that stretch reads QPEVR. Residues 185–205 form a helical membrane-spanning segment; sequence GTLGLLPTAFGNIGILLCFVA. The Extracellular segment spans residues 206-212; sequence GNYMDWS. The helical transmembrane segment at 213-233 threads the bilayer; the sequence is ELAFLGATLPVPFLILMFLIP. Residues 234–296 are Cytoplasmic-facing; sequence ETPRWYVSRG…DLLKKTNLKP (63 aa). A helical transmembrane segment spans residues 297–317; it reads LLISLGLMFFQQLSGINAVIF. Over 318-333 the chain is Extracellular; sequence YTVQIFQDAGSTIDEN. The chain crosses the membrane as a helical span at residues 334 to 354; it reads LCTIIVGVVNFIATFIATLLI. The Cytoplasmic segment spans residues 355–360; the sequence is DRLGRK. Residues 361 to 381 traverse the membrane as a helical segment; sequence MLLYISDIAMIITLMTLGGFF. Residues 382-392 are Extracellular-facing; the sequence is YVKNNGGDVSH. Residues 393–413 traverse the membrane as a helical segment; that stretch reads IGWLPLASFVIFVLGFSLGFG. Residues 414 to 437 lie on the Cytoplasmic side of the membrane; it reads PIPWLMMGEILPGKIRGSAASVAT. Residues 438–458 traverse the membrane as a helical segment; the sequence is AFNWSCTFVVTKTFADIIASI. Topologically, residues 459–461 are extracellular; that stretch reads GTH. A helical transmembrane segment spans residues 462–482; that stretch reads GAFWMFGSVCVVGLVFVIMYV. Residues 483–517 are Cytoplasmic-facing; that stretch reads PETQGKSLEDIERKMCGRVRRMSSVANIKPLSFNM.

This sequence belongs to the major facilitator superfamily. Sugar transporter (TC 2.A.1.1) family. Trehalose transporter subfamily.

The protein resides in the cell membrane. Functionally, high-capacity facilitative transporter for trehalose. Does not transport maltose, sucrose or lactose. Mediates the bidirectional transfer of trehalose. Responsible for the transport of trehalose synthesized in the fat body and the incorporation of trehalose into other tissues that require a carbon source, thereby regulating trehalose levels in the hemolymph. The chain is Facilitated trehalose transporter Tret1 from Culex quinquefasciatus (Southern house mosquito).